The primary structure comprises 173 residues: Ribosome maturation factor RimM (173 aa).

The PRC barrel domain occupies 98-171 (DDQYYYDEII…LITIDALEGL (74 aa)).

The protein belongs to the RimM family. Binds ribosomal protein uS19.

The protein resides in the cytoplasm. Its function is as follows. An accessory protein needed during the final step in the assembly of 30S ribosomal subunit, possibly for assembly of the head region. Essential for efficient processing of 16S rRNA. May be needed both before and after RbfA during the maturation of 16S rRNA. It has affinity for free ribosomal 30S subunits but not for 70S ribosomes. The sequence is that of Ribosome maturation factor RimM from Leuconostoc mesenteroides subsp. mesenteroides (strain ATCC 8293 / DSM 20343 / BCRC 11652 / CCM 1803 / JCM 6124 / NCDO 523 / NBRC 100496 / NCIMB 8023 / NCTC 12954 / NRRL B-1118 / 37Y).